Here is a 131-residue protein sequence, read N- to C-terminus: Fumarate reductase subunit C (131 aa).

A run of 3 helical transmembrane segments spans residues Glu-30 to Leu-50, Phe-63 to His-83, and Ile-109 to Leu-129.

Belongs to the FrdC family. In terms of assembly, part of an enzyme complex containing four subunits: a flavoprotein (FrdA), an iron-sulfur protein (FrdB), and two hydrophobic anchor proteins (FrdC and FrdD).

The protein localises to the cell inner membrane. In terms of biological role, two distinct, membrane-bound, FAD-containing enzymes are responsible for the catalysis of fumarate and succinate interconversion; fumarate reductase is used in anaerobic growth, and succinate dehydrogenase is used in aerobic growth. Anchors the catalytic components of the fumarate reductase complex to the cell inner membrane, binds quinones. The chain is Fumarate reductase subunit C from Shigella dysenteriae serotype 1 (strain Sd197).